A 705-amino-acid polypeptide reads, in one-letter code: Elongation factor G (705 aa).

The 283-residue stretch at H8 to A290 folds into the tr-type G domain. GTP contacts are provided by residues A17–T24, D88–H92, and N142–D145.

The protein belongs to the TRAFAC class translation factor GTPase superfamily. Classic translation factor GTPase family. EF-G/EF-2 subfamily.

It localises to the cytoplasm. In terms of biological role, catalyzes the GTP-dependent ribosomal translocation step during translation elongation. During this step, the ribosome changes from the pre-translocational (PRE) to the post-translocational (POST) state as the newly formed A-site-bound peptidyl-tRNA and P-site-bound deacylated tRNA move to the P and E sites, respectively. Catalyzes the coordinated movement of the two tRNA molecules, the mRNA and conformational changes in the ribosome. This is Elongation factor G from Xylella fastidiosa (strain M23).